Consider the following 651-residue polypeptide: MPTIQLPDGSVKQFSKPVSVQAVAESIGTSLAKPALAGKIDDHLVDVSFIIDKDVSLRIITEKDPEGLEVIRHSAAHLLAHAVKELFPKAEVTIGPVVEDGFYYDFAFERSFTPEDLEKIEEKMRSLAKADLAVERRVLSRDEALTLFKKMGERYKVEIIRDIPKEEILTAYQQGDFIDLCRGPHVPRTGMLKAFKLTKLAGAYWRGDSNNEMLQRIYGTAWADTKALKAYLYRLEEAEKRDHRLLAKKMDLFHFQPESPGNVFWHPNGWSIILQMREYIRHITHKYGYQEVHTPQLIDASLWDKSGHLEKFGDDIFSLPLEPQQYVIKPMSCPAHVQIFNQGVKSYRDLPLRYAEFGACHRNEPSGTLHGLMRLRGFVQDDAHIFCTEDQIQSEVSAFIDQLHEVYADFGFTEVIHKLSTRPEKRVGSDEVWTKAEQALAEALNRKGVEWDILPGEGAFYGPKIEFSLRDCLGRIWQCGTVQVDFSVPERLGAHYIAEDGSKKPPVMIHRAILGSFERFLGILLEESAGKLPLWLAPVQVVVMNITDRQADYVGQTVENLQNLGIRAHSDLRNEKIGFKIREHTIARVPYLVVIGDREVADKTLSVRALEDEASTTITLEEFARQLKAEISQRSRKSPAPSPLFPVGGES.

In terms of domain architecture, TGS spans 1-61; the sequence is MPTIQLPDGS…DKDVSLRIIT (61 aa). A catalytic region spans residues 242–533; that stretch reads DHRLLAKKMD…LLEESAGKLP (292 aa). Zn(2+) is bound by residues C333, H384, and H510. The disordered stretch occupies residues 631-651; sequence ISQRSRKSPAPSPLFPVGGES.

It belongs to the class-II aminoacyl-tRNA synthetase family. In terms of assembly, homodimer. The cofactor is Zn(2+).

The protein localises to the cytoplasm. It catalyses the reaction tRNA(Thr) + L-threonine + ATP = L-threonyl-tRNA(Thr) + AMP + diphosphate + H(+). Its function is as follows. Catalyzes the attachment of threonine to tRNA(Thr) in a two-step reaction: L-threonine is first activated by ATP to form Thr-AMP and then transferred to the acceptor end of tRNA(Thr). Also edits incorrectly charged L-seryl-tRNA(Thr). The protein is Threonine--tRNA ligase of Coxiella burnetii (strain RSA 493 / Nine Mile phase I).